A 326-amino-acid polypeptide reads, in one-letter code: Phospho-N-acetylmuramoyl-pentapeptide-transferase (326 aa).

9 helical membrane passes run 3 to 23 (ISIS…PAFI), 51 to 71 (TMGG…FALF), 79 to 99 (VGMI…DDFL), 115 to 135 (LALQ…GGDI), 138 to 158 (VFGY…FWLV), 169 to 189 (GVDG…GVIA), 195 to 215 (MDIL…FIFN), 221 to 243 (VFMG…MALH), and 306 to 326 (FFFW…LYLM).

Belongs to the glycosyltransferase 4 family. MraY subfamily. Requires Mg(2+) as cofactor.

Its subcellular location is the cell membrane. The enzyme catalyses UDP-N-acetyl-alpha-D-muramoyl-L-alanyl-gamma-D-glutamyl-L-lysyl-D-alanyl-D-alanine + di-trans,octa-cis-undecaprenyl phosphate = Mur2Ac(oyl-L-Ala-gamma-D-Glu-L-Lys-D-Ala-D-Ala)-di-trans,octa-cis-undecaprenyl diphosphate + UMP. It participates in cell wall biogenesis; peptidoglycan biosynthesis. In terms of biological role, catalyzes the initial step of the lipid cycle reactions in the biosynthesis of the cell wall peptidoglycan: transfers peptidoglycan precursor phospho-MurNAc-pentapeptide from UDP-MurNAc-pentapeptide onto the lipid carrier undecaprenyl phosphate, yielding undecaprenyl-pyrophosphoryl-MurNAc-pentapeptide, known as lipid I. This Streptococcus pneumoniae serotype 19F (strain G54) protein is Phospho-N-acetylmuramoyl-pentapeptide-transferase.